The following is a 299-amino-acid chain: Biotin transporter (299 aa).

The next 10 membrane-spanning stretches (helical) occupy residues 2–22 (ALLIITTILWAFSFSFYGEYL), 26–46 (VDSYFAVLVRVGLAALVFLPF), 56–76 (TVGLYMLVGAMQLGVMYMLSF), 81–101 (YLTVSELLLFTVLTPLYITLI), 110–130 (LRWGYAFSALLAVIGAGIIRY), 137–157 (FWTGLLLVQLSNITFAIGMVG), 172–192 (AFAWFYLGAFLVAVIAWFLLG), 202–222 (LQWGILVFLGVVASGIGYFMW), 233–253 (TLGIMNNMHVPAGLLVNLAIW), and 256–276 (QPHWPTFITGALVILASLWVH). 2 EamA domains span residues 3 to 128 (LLII…AGII) and 139 to 274 (TGLL…ASLW).

Belongs to the drug/metabolite transporter (DMT) superfamily. 10 TMS drug/metabolite exporter (DME) (TC 2.A.7.3) family.

It is found in the cell inner membrane. The catalysed reaction is biotin(in) = biotin(out). Uptake of biotin. This Escherichia coli O157:H7 protein is Biotin transporter.